Reading from the N-terminus, the 264-residue chain is Thymidylate synthase (264 aa).

DUMP is bound at residue arginine 21. Residue histidine 51 participates in (6R)-5,10-methylene-5,6,7,8-tetrahydrofolate binding. Arginine 126–arginine 127 is a dUMP binding site. The Nucleophile role is filled by cysteine 146. DUMP is bound by residues arginine 166 to aspartate 169, asparagine 177, and histidine 207 to tyrosine 209. Aspartate 169 contributes to the (6R)-5,10-methylene-5,6,7,8-tetrahydrofolate binding site. (6R)-5,10-methylene-5,6,7,8-tetrahydrofolate is bound at residue serine 263.

This sequence belongs to the thymidylate synthase family. Bacterial-type ThyA subfamily. In terms of assembly, homodimer.

Its subcellular location is the cytoplasm. The enzyme catalyses dUMP + (6R)-5,10-methylene-5,6,7,8-tetrahydrofolate = 7,8-dihydrofolate + dTMP. The protein operates within pyrimidine metabolism; dTTP biosynthesis. Functionally, catalyzes the reductive methylation of 2'-deoxyuridine-5'-monophosphate (dUMP) to 2'-deoxythymidine-5'-monophosphate (dTMP) while utilizing 5,10-methylenetetrahydrofolate (mTHF) as the methyl donor and reductant in the reaction, yielding dihydrofolate (DHF) as a by-product. This enzymatic reaction provides an intracellular de novo source of dTMP, an essential precursor for DNA biosynthesis. The chain is Thymidylate synthase from Neisseria meningitidis serogroup C / serotype 2a (strain ATCC 700532 / DSM 15464 / FAM18).